The primary structure comprises 687 residues: MTTQTLLIELLTEELPPKALNNLGNHFAAAVAEGLEKAQLVDGAAEFTAYASPRRLAVQVKNVKAVQADQKIVKKGPAVANAVKDGAPTKALEGFARGAGAKIEDLTIVHDGKQDVYAYEYVQTGKPLGGLLEDIINAAVKKLPIPKVMRWGSSTFTFVRPVHGLIVLHGGDIVNVSVLGLQSSNQTLGHRFLSNGEITIENADSYAAQMREQGKVVASFAERKAAIQTALEGQARRLNATVAADEALLDEVTALVEYPVVLEAGFEEHFLAVPQECLILTMQQNQKYFPLLDQNGKLMNRFLLVSNLQTEDPSHIIRGNERVLRARLSDAEFFYKQDQKATLESRLPKLANVVYHNKIGSQAERIERLQSIAAHIAKALDADAAAAERAARLAKADLVTEMVGEFPELQGTMGKYYARLDGETEEIAEAIEQHYQPRFAGDKLPESKIAAAVALADKLETLVGIWGIGLIPTGDKDPYALRRAALGILRMLMQYGLDVNELIQTAFDSFPKGLLNEKTPSETADFMQARLAVLLQNDYPQDIVAAVLAKQPRRLDDLTAKLQAVAAFKQLPEAAALAAANKRVQNLLKKADAELGEVNESLLQQDEEKALFAAAQGLQPKIAAAVAEGNFQTALSELASVKPQVDAFFDGVMVMAEDAAVKQNRLNLLNRLAEQMNAVADIALLGE.

Belongs to the class-II aminoacyl-tRNA synthetase family. In terms of assembly, tetramer of two alpha and two beta subunits.

The protein localises to the cytoplasm. It carries out the reaction tRNA(Gly) + glycine + ATP = glycyl-tRNA(Gly) + AMP + diphosphate. The chain is Glycine--tRNA ligase beta subunit from Neisseria meningitidis serogroup C / serotype 2a (strain ATCC 700532 / DSM 15464 / FAM18).